A 469-amino-acid polypeptide reads, in one-letter code: Citrate synthase, mitochondrial (469 aa).

Residues 1-30 constitute a mitochondrion transit peptide; that stretch reads MSFLTVSRLAPKLLNSKNATYFLVAARNAS. Active-site residues include histidine 304 and histidine 350. Arginine 359 is an oxaloacetate binding site. Aspartate 405 is an active-site residue. Oxaloacetate is bound by residues arginine 431 and arginine 451.

Belongs to the citrate synthase family. Homodimer.

Its subcellular location is the mitochondrion matrix. It carries out the reaction oxaloacetate + acetyl-CoA + H2O = citrate + CoA + H(+). It participates in carbohydrate metabolism; tricarboxylic acid cycle; isocitrate from oxaloacetate: step 1/2. Key enzyme of the Krebs tricarboxylic acid cycle which catalyzes the synthesis of citrate from acetyl coenzyme A and oxaloacetate. This chain is Citrate synthase, mitochondrial (cs), found in Kajikia audax (Striped marlin).